The following is a 308-amino-acid chain: Zinc finger protein unc-98 (308 aa).

2 consecutive C2H2-type zinc fingers follow at residues 111-133 (YKCR…ERIH) and 139-161 (YVCG…AAQH). The C2H2-type 3; degenerate zinc finger occupies 166-186 (GFKCDCGRTFFSYTEMLYHKH). The C2H2-type 4 zinc finger occupies 244-266 (YICEYCSKSYSDSRGLAYHMYSH).

The protein resides in the nucleus. It localises to the cytoplasm. In terms of biological role, probable transcription factor. Required for muscle structure. Its dual subcellular localization suggests that it may function both as a muscle adhesion complex protein and as a transcription factor, or work together with transcription factors, to influence gene expression. Thought to act as a molecular bridge between unc-97 and mhc-a at the M-line of muscles, possibly in a signaling role. This is Zinc finger protein unc-98 from Caenorhabditis briggsae.